A 219-amino-acid polypeptide reads, in one-letter code: Thiopurine S-methyltransferase (219 aa).

S-adenosyl-L-methionine is bound by residues Trp-10, Leu-45, Glu-66, and Arg-123.

Belongs to the class I-like SAM-binding methyltransferase superfamily. TPMT family.

Its subcellular location is the cytoplasm. The catalysed reaction is S-adenosyl-L-methionine + a thiopurine = S-adenosyl-L-homocysteine + a thiopurine S-methylether.. In Marinobacter nauticus (strain ATCC 700491 / DSM 11845 / VT8) (Marinobacter aquaeolei), this protein is Thiopurine S-methyltransferase.